Here is a 192-residue protein sequence, read N- to C-terminus: Leucine-rich repeat-containing protein 51 (192 aa).

LRR repeat units lie at residues 49–71, 80–101, and 103–124; these read SLTQ…NQVA, NLAW…LTTF, and NLSV…NKLA. The LRRCT domain occupies 137-175; that stretch reads NPMEEEKGYRQYVLCTLSRITTFDFSGVTKADRTTAEVW.

Its subcellular location is the cytoplasm. The polypeptide is Leucine-rich repeat-containing protein 51 (Homo sapiens (Human)).